Here is a 107-residue protein sequence, read N- to C-terminus: Nucleoid-associated protein Pnuc_0701 (107 aa).

The protein belongs to the YbaB/EbfC family. Homodimer.

It is found in the cytoplasm. The protein localises to the nucleoid. Functionally, binds to DNA and alters its conformation. May be involved in regulation of gene expression, nucleoid organization and DNA protection. The sequence is that of Nucleoid-associated protein Pnuc_0701 from Polynucleobacter asymbioticus (strain DSM 18221 / CIP 109841 / QLW-P1DMWA-1) (Polynucleobacter necessarius subsp. asymbioticus).